Reading from the N-terminus, the 403-residue chain is Synaptotagmin-7 (403 aa).

The Vesicular segment spans residues 1 to 16 (MYRDPEAASPGAPSRD). A helical transmembrane segment spans residues 17–37 (VLLVSAIITVSLSVTVVLCGL). Topologically, residues 38 to 403 (CHWCQRKLGK…PVAQWHQLKA (366 aa)) are cytoplasmic. Serine 52 carries the post-translational modification Phosphoserine. A disordered region spans residues 53–106 (LETVGTPDSGRGRSEKKAIKLPAGGKAVNTAPVPGQTPHDESDRRTEPRSSVSD). At threonine 58 the chain carries Phosphothreonine. Phosphoserine is present on serine 61. Residues 90-100 (PHDESDRRTEP) are compositionally biased toward basic and acidic residues. 2 positions are modified to phosphoserine: serine 119 and serine 122. C2 domains follow at residues 135–255 (NLGR…TFWK) and 266–399 (SRGE…AQWH). Residues aspartate 166, aspartate 172, aspartate 225, aspartate 227, serine 230, aspartate 233, aspartate 297, aspartate 303, aspartate 357, aspartate 359, serine 362, and aspartate 365 each coordinate Ca(2+).

This sequence belongs to the synaptotagmin family. Homodimer. Can also form heterodimers with SYT6, SYT9 and SYT10. Interacts with calmodulin (CALM1, CALM2 or CALM3). Interacts with CD63; required for localization to lysosomes. Interacts with APP. It depends on Ca(2+) as a cofactor. In terms of processing, palmitoylated at its vesicular N-terminus; palmitoylation is required for localization to lysosome and phagocytosis in macrophages. In terms of tissue distribution, expressed in a variety of adult and fetal tissues.

The protein localises to the cell membrane. It localises to the presynaptic cell membrane. It is found in the cytoplasmic vesicle. The protein resides in the secretory vesicle. Its subcellular location is the synaptic vesicle membrane. The protein localises to the lysosome membrane. It localises to the phagosome membrane. It is found in the peroxisome membrane. The protein resides in the secretory vesicle membrane. Ca(2+) sensor involved in Ca(2+)-dependent exocytosis of secretory and synaptic vesicles through Ca(2+) and phospholipid binding to the C2 domain. Ca(2+) induces binding of the C2-domains to phospholipid membranes and to assembled SNARE-complexes; both actions contribute to triggering exocytosis. SYT7 binds Ca(2+) with high affinity and slow kinetics compared to other synaptotagmins. Involved in Ca(2+)-triggered lysosomal exocytosis, a major component of the plasma membrane repair. Ca(2+)-regulated delivery of lysosomal membranes to the cell surface is also involved in the phagocytic uptake of particles by macrophages. Ca(2+)-triggered lysosomal exocytosis also plays a role in bone remodeling by regulating secretory pathways in osteoclasts and osteoblasts. In case of infection, involved in participates cell invasion by Trypanosoma cruzi via Ca(2+)-triggered lysosomal exocytosis. Involved in cholesterol transport from lysosome to peroxisome by promoting membrane contacts between lysosomes and peroxisomes: probably acts by promoting vesicle fusion by binding phosphatidylinositol-4,5-bisphosphate on peroxisomal membranes. Acts as a key mediator of synaptic facilitation, a process also named short-term synaptic potentiation: synaptic facilitation takes place at synapses with a low initial release probability and is caused by influx of Ca(2+) into the axon terminal after spike generation, increasing the release probability of neurotransmitters. Probably mediates synaptic facilitation by directly increasing the probability of release. May also contribute to synaptic facilitation by regulating synaptic vesicle replenishment, a process required to ensure that synaptic vesicles are ready for the arrival of the next action potential: SYT7 is required for synaptic vesicle replenishment by acting as a sensor for Ca(2+) and by forming a complex with calmodulin. Also acts as a regulator of Ca(2+)-dependent insulin and glucagon secretion in beta-cells. Triggers exocytosis by promoting fusion pore opening and fusion pore expansion in chromaffin cells. Also regulates the secretion of some non-synaptic secretory granules of specialized cells. The chain is Synaptotagmin-7 from Homo sapiens (Human).